The following is a 114-amino-acid chain: Probable 4-amino-4-deoxy-L-arabinose-phosphoundecaprenol flippase subunit ArnE (114 aa).

The next 3 membrane-spanning stretches (helical) occupy residues 41–61 (PWLI…IYLL), 64–84 (LPLS…LVGS), and 94–114 (YHNW…GGLL). An EamA domain is found at 43-112 (LIASVAALGC…IIVGALLLGG (70 aa)).

This sequence belongs to the ArnE family. In terms of assembly, heterodimer of ArnE and ArnF.

It localises to the cell inner membrane. Its pathway is bacterial outer membrane biogenesis; lipopolysaccharide biosynthesis. Its function is as follows. Translocates 4-amino-4-deoxy-L-arabinose-phosphoundecaprenol (alpha-L-Ara4N-phosphoundecaprenol) from the cytoplasmic to the periplasmic side of the inner membrane. This is Probable 4-amino-4-deoxy-L-arabinose-phosphoundecaprenol flippase subunit ArnE from Aeromonas hydrophila subsp. hydrophila (strain ATCC 7966 / DSM 30187 / BCRC 13018 / CCUG 14551 / JCM 1027 / KCTC 2358 / NCIMB 9240 / NCTC 8049).